A 919-amino-acid chain; its full sequence is Beta-galactosidase 15 (919 aa).

Residues 1–31 form the signal peptide; it reads MAASRGPPLLGFRALALALLLAILLLLGCSA. An N-linked (GlcNAc...) asparagine glycan is attached at Asn63. Residue Glu220 is the Proton donor of the active site. Glu289 (nucleophile) is an active-site residue. Residues Asn412, Asn530, Asn546, and Asn855 are each glycosylated (N-linked (GlcNAc...) asparagine). Residues 822 to 907 form the SUEL-type lectin domain; it reads NAATPELRLQ…KDLAVEAKCS (86 aa).

This sequence belongs to the glycosyl hydrolase 35 family.

Its subcellular location is the secreted. The protein resides in the extracellular space. The protein localises to the apoplast. It carries out the reaction Hydrolysis of terminal non-reducing beta-D-galactose residues in beta-D-galactosides.. The protein is Beta-galactosidase 15 of Oryza sativa subsp. japonica (Rice).